The following is a 106-amino-acid chain: DNA-directed RNA polymerase subunit Rpo6 (106 aa).

Belongs to the archaeal Rpo6/eukaryotic RPB6 RNA polymerase subunit family. As to quaternary structure, part of the RNA polymerase complex.

The protein localises to the cytoplasm. It carries out the reaction RNA(n) + a ribonucleoside 5'-triphosphate = RNA(n+1) + diphosphate. DNA-dependent RNA polymerase (RNAP) catalyzes the transcription of DNA into RNA using the four ribonucleoside triphosphates as substrates. This chain is DNA-directed RNA polymerase subunit Rpo6, found in Pyrobaculum aerophilum (strain ATCC 51768 / DSM 7523 / JCM 9630 / CIP 104966 / NBRC 100827 / IM2).